A 63-amino-acid chain; its full sequence is UPF0434 protein Mmar10_2939 (63 aa).

It belongs to the UPF0434 family.

The chain is UPF0434 protein Mmar10_2939 from Maricaulis maris (strain MCS10) (Caulobacter maris).